The chain runs to 713 residues: Forkhead box protein P2 (713 aa).

The segment covering 1 to 28 has biased composition (polar residues); it reads MMQESVTETISNSSMNQNGMSTLSSQLD. Disordered regions lie at residues 1–44 and 279–337; these read MMQE…SSEV and DNGI…TGAS. The segment covering 290–303 has biased composition (low complexity); that stretch reads TTNNSSSTTSSTTS. Over residues 313–322 the composition is skewed to polar residues; it reads SIVNGQSSVL. Residues 324–335 show a composition bias toward basic and acidic residues; that stretch reads ARRDSSSHEETG. The C2H2-type zinc-finger motif lies at 344-369; sequence GVCKWPGCESICEDFGQFLKHLNNEH. The segment at 386–407 is leucine-zipper; the sequence is VQQLEIQLSKERERLQAMMTHL. A CTBP1-binding region spans residues 420–424; it reads PLNLV. The segment covering 436-457 has biased composition (low complexity); that stretch reads TSPQSLPQTPTTPTAPVTPITQ. Residues 436 to 463 form a disordered region; that stretch reads TSPQSLPQTPTTPTAPVTPITQGPSVIT. The fork-head DNA-binding region spans 502–592; the sequence is RPPFTYATLI…SQKITGSPTL (91 aa). Disordered stretches follow at residues 647 to 666 and 676 to 713; these read LDHI…QPHI and VIAE…EDLE. Acidic residues predominate over residues 697 to 713; that stretch reads LEDDREIEEEPLSEDLE.

Forms homodimers and heterodimers with FOXP1 and FOXP4. Dimerization is required for DNA-binding. Interacts with CTBP1. Interacts with FOXP1. Interacts with TBR1. Interacts with ZMYM2.

Its subcellular location is the nucleus. In terms of biological role, transcriptional repressor that may play a role in the specification and differentiation of lung epithelium. May also play a role in developing neural, gastrointestinal and cardiovascular tissues. Can act with CTBP1 to synergistically repress transcription but CTPBP1 is not essential. Plays a role in synapse formation by regulating SRPX2 levels. This is Forkhead box protein P2 (FOXP2) from Pongo pygmaeus (Bornean orangutan).